Here is a 478-residue protein sequence, read N- to C-terminus: Deoxyribodipyrimidine photo-lyase (478 aa).

In terms of domain architecture, Photolyase/cryptochrome alpha/beta spans 2 to 136 (NVNLMWFRND…IINCFHDSVL (135 aa)). A (6R)-5,10-methylene-5,6,7,8-tetrahydrofolate-binding site is contributed by E110. FAD contacts are provided by residues Y227 and 239–243 (TSMLS). Interaction with DNA regions lie at residues 279 to 286 (ELLWREFY) and 346 to 347 (NR). An FAD-binding site is contributed by 377–379 (DGD). Residue Q409 coordinates DNA.

The protein belongs to the DNA photolyase class-1 family. Monomer. It depends on FAD as a cofactor. (6R)-5,10-methylene-5,6,7,8-tetrahydrofolate is required as a cofactor.

It catalyses the reaction cyclobutadipyrimidine (in DNA) = 2 pyrimidine residues (in DNA).. In terms of biological role, involved in repair of UV radiation-induced DNA damage. Catalyzes the light-dependent monomerization (300-600 nm) of cyclobutyl pyrimidine dimers (in cis-syn configuration), which are formed between adjacent bases on the same DNA strand upon exposure to ultraviolet radiation. This is Deoxyribodipyrimidine photo-lyase (phrB) from Buchnera aphidicola subsp. Baizongia pistaciae (strain Bp).